The chain runs to 212 residues: Large ribosomal subunit protein uL3 (212 aa).

The segment covering Leu-139 to Pro-153 has biased composition (polar residues). Residues Leu-139–Lys-161 form a disordered region. The residue at position 151 (Gln-151) is an N5-methylglutamine.

It belongs to the universal ribosomal protein uL3 family. Part of the 50S ribosomal subunit. Forms a cluster with proteins L14 and L19. Post-translationally, methylated by PrmB.

Functionally, one of the primary rRNA binding proteins, it binds directly near the 3'-end of the 23S rRNA, where it nucleates assembly of the 50S subunit. The sequence is that of Large ribosomal subunit protein uL3 from Baumannia cicadellinicola subsp. Homalodisca coagulata.